The primary structure comprises 278 residues: Splicing factor YJU2 (278 aa).

Zn(2+)-binding residues include Cys51, Cys54, Cys88, and Cys91. The interval 228-278 is disordered; sequence HRQRTNKPGNNNDEKRTPLFNPTSTKGKIQKKSSVRTNPLGIVIKRGKSLK. Short sequence motifs (nuclear localization signal) lie at residues 242–258 and 260–278; these read KRTPLFNPTSTKGKIQK and SSVRTNPLGIVIKRGKSLK.

Belongs to the CWC16 family. YJU2 subfamily. Component of the spliceosome. Present in the activated B complex, the catalytically activated B* complex which catalyzes the branching, the catalytic step 1 C complex catalyzing the exon ligation, and the postcatalytic P complex containing the ligated exons (mRNA) and the excised lariat intron. Interacts (via C-terminus) with CLF1. Interacts (via N-terminus) with SYF1. Interacts with U2 snRNA; this interaction is direct. Identified in the CWC complex (or CEF1-associated complex), a spliceosome sub-complex reminiscent of a late-stage spliceosome composed of the U2, U5 and U6 snRNAs and at least BUD13, BUD31, BRR2, CDC40, CEF1, CLF1, CUS1, CWC2, CWC15, CWC21, CWC22, CWC23, CWC24, CWC25, CWC27, ECM2, HSH155, IST3, ISY1, LEA1, MSL1, NTC20, PRP8, PRP9, PRP11, PRP19, PRP21, PRP22, PRP45, PRP46, SLU7, SMB1, SMD1, SMD2, SMD3, SMX2, SMX3, SNT309, SNU114, SPP2, SYF1, SYF2, RSE1 and YJU2.

The protein resides in the nucleus. Functionally, part of the spliceosome which catalyzes two sequential transesterification reactions, first the excision of the non-coding intron from pre-mRNA and then the ligation of the coding exons to form the mature mRNA. Plays a role (via N-terminus) in stabilizing the structure of the spliceosome catalytic core and docking of the branch helix into the active site, producing 5'-exon and lariat intron-3'-intermediates. Further stabilizes spliceosome conformation for 3'-splice site docking (via C-terminus) promoting exon ligation. This is Splicing factor YJU2 from Saccharomyces cerevisiae (strain ATCC 204508 / S288c) (Baker's yeast).